The primary structure comprises 250 residues: Silencing boundary-establishment protein FUB1 (250 aa).

Positions 179-250 (PDWSGGLPNP…GFGGSGSGFI (72 aa)) are disordered. A compositionally biased stretch (basic and acidic residues) spans 202–213 (PNRRPAPRREDM). Over residues 229-250 (PGSGGFGGSGSGGFGGSGSGFI) the composition is skewed to gly residues.

The protein belongs to the proteasome inhibitor PI31 family. In terms of assembly, interacts with the 20S proteasome.

Plays a role in the establishment of transcriptional silencing boundaries, preventing the propagation of heterochromatic silencing. In Saccharomyces cerevisiae (strain ATCC 204508 / S288c) (Baker's yeast), this protein is Silencing boundary-establishment protein FUB1.